The chain runs to 876 residues: Alanine--tRNA ligase (876 aa).

Positions 565, 569, 667, and 671 each coordinate Zn(2+).

It belongs to the class-II aminoacyl-tRNA synthetase family. Zn(2+) is required as a cofactor.

It localises to the cytoplasm. It carries out the reaction tRNA(Ala) + L-alanine + ATP = L-alanyl-tRNA(Ala) + AMP + diphosphate. Functionally, catalyzes the attachment of alanine to tRNA(Ala) in a two-step reaction: alanine is first activated by ATP to form Ala-AMP and then transferred to the acceptor end of tRNA(Ala). Also edits incorrectly charged Ser-tRNA(Ala) and Gly-tRNA(Ala) via its editing domain. This is Alanine--tRNA ligase from Staphylococcus saprophyticus subsp. saprophyticus (strain ATCC 15305 / DSM 20229 / NCIMB 8711 / NCTC 7292 / S-41).